The chain runs to 377 residues: uncharacterized protein (377 aa).

Residues 309–375 (NIISVDKIKE…ISNLNKKLKK (67 aa)) are a coiled coil.

This sequence belongs to the mimivirus L5 family.

This is an uncharacterized protein from Acanthamoeba polyphaga (Amoeba).